Consider the following 257-residue polypeptide: UPF0246 protein BT_3869 (257 aa).

Belongs to the UPF0246 family.

This Bacteroides thetaiotaomicron (strain ATCC 29148 / DSM 2079 / JCM 5827 / CCUG 10774 / NCTC 10582 / VPI-5482 / E50) protein is UPF0246 protein BT_3869.